A 137-amino-acid chain; its full sequence is Large ribosomal subunit protein uL16 (137 aa).

Over residues 1 to 17 the composition is skewed to basic residues; that stretch reads MLQPKRTKFRKQMKGRN. The disordered stretch occupies residues 1–22; the sequence is MLQPKRTKFRKQMKGRNRGLAQ.

Belongs to the universal ribosomal protein uL16 family. Part of the 50S ribosomal subunit.

Its function is as follows. Binds 23S rRNA and is also seen to make contacts with the A and possibly P site tRNAs. This Teredinibacter turnerae (strain ATCC 39867 / T7901) protein is Large ribosomal subunit protein uL16.